The primary structure comprises 345 residues: Arginine N-succinyltransferase (345 aa).

A succinyl-CoA-binding site is contributed by Leu-125. His-229 acts as the Proton donor in catalysis.

The protein belongs to the arginine N-succinyltransferase family.

The enzyme catalyses succinyl-CoA + L-arginine = N(2)-succinyl-L-arginine + CoA + H(+). Its pathway is amino-acid degradation; L-arginine degradation via AST pathway; L-glutamate and succinate from L-arginine: step 1/5. Functionally, catalyzes the transfer of succinyl-CoA to arginine to produce N(2)-succinylarginine. The sequence is that of Arginine N-succinyltransferase from Yersinia enterocolitica serotype O:8 / biotype 1B (strain NCTC 13174 / 8081).